A 328-amino-acid polypeptide reads, in one-letter code: DNA-directed RNA polymerase subunit alpha (328 aa).

Positions 1–231 (MIYQMQMPEK…EHVSLFANFS (231 aa)) are alpha N-terminal domain (alpha-NTD). Positions 252 to 328 (MRKMLLTRIE…MDITKYQMKG (77 aa)) are alpha C-terminal domain (alpha-CTD).

This sequence belongs to the RNA polymerase alpha chain family. Homodimer. The RNAP catalytic core consists of 2 alpha, 1 beta, 1 beta' and 1 omega subunit. When a sigma factor is associated with the core the holoenzyme is formed, which can initiate transcription.

The catalysed reaction is RNA(n) + a ribonucleoside 5'-triphosphate = RNA(n+1) + diphosphate. In terms of biological role, DNA-dependent RNA polymerase catalyzes the transcription of DNA into RNA using the four ribonucleoside triphosphates as substrates. This chain is DNA-directed RNA polymerase subunit alpha, found in Chlorobium phaeobacteroides (strain BS1).